The chain runs to 1442 residues: DNA-binding protein RFX7 (1442 aa).

The tract at residues 1-36 is disordered; that stretch reads MEEEQQQQQQQQQAQKMQGTEQSAQLPPSAPGALPA. Positions 112–187 form a DNA-binding region, RFX-type winged-helix; that stretch reads AFSWIRNTLE…YCYSGLRKKA (76 aa). The PxLPxI/L motif motif lies at 192 to 197; sequence PSLPNL. Disordered regions lie at residues 406 to 426, 485 to 514, and 929 to 1001; these read MQSV…GDRS, SAGT…KNGS, and SVTP…SVPP. Positions 935–947 are enriched in pro residues; that stretch reads TPTPTPTPTPTLT. Over residues 957–995 the composition is skewed to polar residues; that stretch reads GTQSLSRESPCSRLAQTTPVDSALGSSRHTPVGTPHSNC.

It belongs to the RFX family.

It is found in the nucleus. Transcription factor. Acts as a transcriptional activator by binding to promoter regions of target genes. Plays a role in natural killer (NK) cell maintenance and immunity. Plays a role in the process of ciliogenesis in the neural tube and neural tube closure by regulating the expression of RFX4. The sequence is that of DNA-binding protein RFX7 from Xenopus laevis (African clawed frog).